A 221-amino-acid chain; its full sequence is Phosphoglycolate phosphatase (221 aa).

The active-site Nucleophile is Asp-10. Mg(2+)-binding residues include Asp-10, Asp-12, and Asp-168.

Belongs to the HAD-like hydrolase superfamily. CbbY/CbbZ/Gph/YieH family. Mg(2+) serves as cofactor.

The catalysed reaction is 2-phosphoglycolate + H2O = glycolate + phosphate. It functions in the pathway organic acid metabolism; glycolate biosynthesis; glycolate from 2-phosphoglycolate: step 1/1. Specifically catalyzes the dephosphorylation of 2-phosphoglycolate. Is involved in the dissimilation of the intracellular 2-phosphoglycolate formed during the DNA repair of 3'-phosphoglycolate ends, a major class of DNA lesions induced by oxidative stress. This chain is Phosphoglycolate phosphatase, found in Xanthomonas campestris pv. campestris (strain 8004).